Consider the following 31-residue polypeptide: Nemertide alpha-5 (31 aa).

Intrachain disulfides connect Cys2/Cys16, Cys9/Cys20, and Cys15/Cys26. Pro28 and Pro29 each carry 4-hydroxyproline.

The protein belongs to the nemertide family. Confined to the epidermis and to the mucus layer.

It is found in the secreted. Its function is as follows. Highly potent toxin against both insect and some mammalian sodium channels (Nav). It potently inhibits inactivation of insect sodium channels of B.germanica (BgNav1) (EC(50)=7.8 nM) and also delays the inactivation of mammalian Nav with potent activity on Nav1.3/SCN3A and Nav1.4/SCN4A (hNav1.1/SCN1A; EC(50)=102.1 nM, rNav1.2/SCN2A; EC(50)=156.1 nM, rNav1.3/SCN3A; EC(50)=9.4 nM, rNav1.4/SCN4A; EC(50)=15.4 nM, hNav1.5/SCN5A; EC(50)=132.7 nM, mNav1.6/SCN8A; EC(50)=66.9 nM, hNav1.9/SCN9A; EC(50)=73 nM). 1 uM is enough to completely inhibits the inactivation, resulting in sustained non-inactivating currents. In addition, the toxin significantly enhances the recovery from inactivation, and the open state is not required for the toxin to interact with the channel. In vivo, injection into brine shrimp (Artemia salina) stops movement or causes death after 24 hours (EC(50)=0.4 uM). In Ramphogordius pseudolacteus (Ribbon worm), this protein is Nemertide alpha-5.